The primary structure comprises 443 residues: Ribulose bisphosphate carboxylase large chain (443 aa).

Asn-89 and Thr-139 together coordinate substrate. Lys-141 serves as the catalytic Proton acceptor. Position 143 (Lys-143) interacts with substrate. Mg(2+) is bound by residues Lys-167, Asp-169, and Glu-170. Lys-167 bears the N6-carboxylysine mark. The active-site Proton acceptor is the His-260. Substrate contacts are provided by Arg-261, His-293, and Ser-345.

The protein belongs to the RuBisCO large chain family. Type I subfamily. Heterohexadecamer of 8 large chains and 8 small chains; disulfide-linked. The disulfide link is formed within the large subunit homodimers. It depends on Mg(2+) as a cofactor. The disulfide bond which can form in the large chain dimeric partners within the hexadecamer appears to be associated with oxidative stress and protein turnover.

It is found in the plastid. It localises to the chloroplast. The enzyme catalyses 2 (2R)-3-phosphoglycerate + 2 H(+) = D-ribulose 1,5-bisphosphate + CO2 + H2O. The catalysed reaction is D-ribulose 1,5-bisphosphate + O2 = 2-phosphoglycolate + (2R)-3-phosphoglycerate + 2 H(+). Functionally, ruBisCO catalyzes two reactions: the carboxylation of D-ribulose 1,5-bisphosphate, the primary event in carbon dioxide fixation, as well as the oxidative fragmentation of the pentose substrate in the photorespiration process. Both reactions occur simultaneously and in competition at the same active site. This chain is Ribulose bisphosphate carboxylase large chain, found in Sesamum indicum (Oriental sesame).